A 1821-amino-acid polypeptide reads, in one-letter code: Latent-transforming growth factor beta-binding protein 2 (1821 aa).

A signal peptide spans 1–35 (MRPRTKARSPGRALRNPWRGFLPLTLALFVGAGHA). Disordered regions lie at residues 38 to 58 (DPVGRYEPAGGDANRLRRPGG) and 81 to 165 (GLQP…RLTG). The interval 94–115 (SPRRPTEAEARRPSRAQQSRRV) is heparin-binding. Composition is skewed to low complexity over residues 108-120 (RAQQSRRVQPPAQ) and 129-145 (QQQPAPRTRAAPALPRL). An N-linked (GlcNAc...) asparagine glycan is attached at Asn181. Residues 187–219 (IKPVCEPPCQNRGSCSRPQLCVCRSGFRGARCE) form the EGF-like 1 domain. 3 cysteine pairs are disulfide-bonded: Cys191–Cys201, Cys195–Cys207, and Cys209–Cys218. The tract at residues 229-339 (PQNSRLAPRR…AVPLEHPSSP (111 aa)) is disordered. Positions 232 to 249 (SRLAPRRWAERSPNLRRS) are heparin-binding. The segment covering 262 to 274 (PPAPQSPPAPQSP) has biased composition (pro residues). 2 stretches are compositionally biased toward polar residues: residues 280-292 (SGLSQTHPSQQHV) and 304-314 (ATASSQLSSNA). Asn343 is a glycosylation site (N-linked (GlcNAc...) asparagine). 344 to 354 (LTEKIKKIKIV) contacts heparin. The Cell attachment site signature appears at 375–377 (RGD). Residues 396-428 (RIYFCQIPCLNGGRCIGRDECWCPANSTGKFCH) enclose the EGF-like 2 domain. 3 disulfide bridges follow: Cys400–Cys410, Cys404–Cys416, and Cys418–Cys427. The N-linked (GlcNAc...) asparagine glycan is linked to Asn421. Ser506 is subject to Phosphoserine. Residues 510-544 (RPPPWLPASPGHSLWDSNNIPARSGEPPRPLPPAA) are disordered. Residues 552-604 (GRCYLNTVNGQCANPLLELTTQEDCCGSVGAFWGVTLCAPCPPRPASPVIENG) form the TB 1 domain. 3 cysteine pairs are disulfide-bonded: Cys554–Cys576, Cys563–Cys589, and Cys577–Cys592. The N-linked (GlcNAc...) asparagine glycan is linked to Asn616. In terms of domain architecture, EGF-like 3; calcium-binding spans 622–662 (DINECLTLGLCKDAECVNTRGSYLCTCRPGLMLDPSRSRCV). 7 disulfides stabilise this stretch: Cys626–Cys637, Cys632–Cys646, Cys648–Cys661, Cys674–Cys696, Cys683–Cys709, Cys697–Cys712, and Cys698–Cys724. The region spanning 672–724 (GLCYRSLGPGTCTLPLAQRITKQICCCSRVGKAWGSECEKCPLPGTEAFREIC) is the TB 2 domain. A compositionally biased stretch (basic and acidic residues) spans 744–757 (AEEEELARPPREQG). Positions 744 to 772 (AEEEELARPPREQGQRSSGALPGPAERQP) are disordered. An N-linked (GlcNAc...) asparagine glycan is attached at Asn811. In terms of domain architecture, EGF-like 4 spans 844 to 886 (GIDRCAAGATNVCGPGTCVNLPDGYRCVCSPGYQLHPSQAYCT). Disulfide bonds link Cys848/Cys861, Cys856/Cys870, Cys872/Cys885, Cys891/Cys902, Cys896/Cys911, Cys913/Cys928, Cys934/Cys945, Cys940/Cys954, Cys956/Cys968, Cys974/Cys985, Cys980/Cys994, Cys997/Cys1008, Cys1014/Cys1025, Cys1020/Cys1034, Cys1036/Cys1049, Cys1055/Cys1066, Cys1061/Cys1075, Cys1078/Cys1091, Cys1097/Cys1108, Cys1103/Cys1117, Cys1120/Cys1133, Cys1139/Cys1151, Cys1146/Cys1160, Cys1162/Cys1174, Cys1180/Cys1192, Cys1186/Cys1201, Cys1203/Cys1216, Cys1222/Cys1233, Cys1228/Cys1242, Cys1244/Cys1257, Cys1263/Cys1276, Cys1271/Cys1285, Cys1289/Cys1301, Cys1307/Cys1319, Cys1313/Cys1328, Cys1330/Cys1343, Cys1349/Cys1361, Cys1356/Cys1370, Cys1372/Cys1386, Cys1413/Cys1436, Cys1423/Cys1448, Cys1437/Cys1451, Cys1438/Cys1463, Cys1489/Cys1502, Cys1497/Cys1511, Cys1513/Cys1526, Cys1532/Cys1542, Cys1537/Cys1551, and Cys1553/Cys1566. An EGF-like 5; calcium-binding domain is found at 887–929 (DDNECLRDPCKGKGRCINRVGSYSCFCYPGYTLATSGATQECQ). Positions 930-969 (DINECEQPGVCSGGQCTNTEGSYHCECDQGYIMVRKGHCQ) constitute an EGF-like 6; calcium-binding domain. The region spanning 970–1009 (DINECRHPGTCPDGRCVNSPGSYTCLACEEGYRGQSGSCV) is the EGF-like 7; calcium-binding domain. One can recognise an EGF-like 8; calcium-binding domain in the interval 1010 to 1050 (DVNECLTPGVCAHGKCTNLEGSFRCSCEQGYEVTSDEKGCQ). The EGF-like 9; calcium-binding domain maps to 1051 to 1092 (DVDECASRASCPTGLCLNTEGSFACSACENGYWVNEDGTACE). Residues 1093 to 1134 (DLDECAFPGVCPSGVCTNTAGSFSCKDCDGGYRPSPLGDSCE) enclose the EGF-like 10; calcium-binding domain. In terms of domain architecture, EGF-like 11; calcium-binding spans 1135-1175 (DVDECEDPQSSCLGGECKNTVGSYQCLCPQGFQLANGTVCE). Residue Asn1170 is glycosylated (N-linked (GlcNAc...) asparagine). The EGF-like 12; calcium-binding domain maps to 1176–1217 (DVNECMGEEHCAPHGECLNSHGSFFCLCAPGFVSAEGGTSCQ). In terms of domain architecture, EGF-like 13; calcium-binding spans 1218-1258 (DVDECATTDPCVGGHCVNTEGSFNCLCETGFQPSPESGECV). Residues 1259-1302 (DIDECEDYGDPVCGTWKCENSPGSYRCVLGCQPGFHMAPNGDCI) form the EGF-like 14; calcium-binding domain. Residues 1303–1344 (DIDECANDTMCGSHGFCDNTDGSFRCLCDQGFEISPSGWDCV) form the EGF-like 15; calcium-binding domain. Residue Asn1309 is glycosylated (N-linked (GlcNAc...) asparagine). One can recognise an EGF-like 16; calcium-binding domain in the interval 1345 to 1387 (DVNECELMLAVCGAALCENVEGSFLCLCASDLEEYDAQEGHCR). The region spanning 1411–1463 (MDCYSGQKGHAPCSSVLGRNTTQAECCCTQGASWGDACDLCPSEDSAEFSEIC) is the TB 3 domain. Residue Asn1430 is glycosylated (N-linked (GlcNAc...) asparagine). The 43-residue stretch at 1485–1527 (DADECVIFGPGLCPNGRCLNTVPGYVCLCNPGFHYDASHKKCE) folds into the EGF-like 17; calcium-binding domain. The region spanning 1528-1567 (DHDECQDLACENGECVNTEGSFHCFCSPPLTLDLSQQRCM) is the EGF-like 18; calcium-binding domain. N-linked (GlcNAc...) asparagine glycosylation occurs at Asn1568. Positions 1584–1636 (DICWKKVTNDVCSEPLRGHRTTYTECCCQDGEAWSQQCALCPPRSSEVYAQLC) constitute a TB 4 domain. Cystine bridges form between Cys1586–Cys1609, Cys1595–Cys1621, Cys1610–Cys1624, Cys1611–Cys1636, Cys1737–Cys1748, Cys1743–Cys1757, Cys1759–Cys1772, Cys1778–Cys1793, Cys1788–Cys1802, and Cys1804–Cys1817. The interval 1639–1821 (ARIEAEREAG…AGPPHCTAKE (183 aa)) is C-terminal domain. Residues 1733–1773 (QAEECGILNGCENGRCVRVREGYTCDCFEGFQLDAAHMACV) enclose the EGF-like 19; calcium-binding domain. The 45-residue stretch at 1774–1818 (DVNECDDLNGPAVLCVHGYCENTEGSYRCHCSPGYVAEAGPPHCT) folds into the EGF-like 20; calcium-binding domain.

Belongs to the LTBP family. As to quaternary structure, forms part of the large latent transforming growth factor beta precursor complex; removal is essential for activation of complex. Interacts with SDC4. Interacts (via C-terminal domain) with FBN1 (via N-terminal domain) in a Ca(+2)-dependent manner. Post-translationally, N-Glycosylated. Contains hydroxylated asparagine residues. Expressed in the aorta (at protein level). Expressed in lung, weakly expressed in heart, placenta, liver and skeletal muscle.

The protein resides in the secreted. It is found in the extracellular space. Its subcellular location is the extracellular matrix. In terms of biological role, may play an integral structural role in elastic-fiber architectural organization and/or assembly. This Homo sapiens (Human) protein is Latent-transforming growth factor beta-binding protein 2 (LTBP2).